The sequence spans 668 residues: E3 ubiquitin-protein ligase RNF139 (668 aa).

Alanine 2 bears the N-acetylalanine mark. 11 helical membrane-spanning segments follow: residues 51 to 71, 85 to 105, 125 to 145, 154 to 174, 178 to 198, 293 to 313, 323 to 343, 356 to 376, 390 to 410, 420 to 440, and 470 to 490; these read IGLQ…VLIL, AFLL…HIDF, SLWM…VTLL, LMIL…PLHI, VVLM…AVKL, GMSA…LAFI, LGFV…LSGL, MCLL…PVLM, FPVL…SYVL, LFAV…SLTV, and IIEF…MMFE. Residues 547-586 form an RING-type; atypical zinc finger; it reads CAICYHEFTTSARITPCNHYFHALCLRKWLYIQDTCPMCH. The disordered stretch occupies residues 602-668; sequence SNNNGFIAPN…AAAEFNDDTD (67 aa). Over residues 618-630 the composition is skewed to basic and acidic residues; it reads EALREDAAGSDRE. The span at 631–641 shows a compositional bias: acidic residues; it reads LNEDDSTDCDD. Residue serine 636 is modified to Phosphoserine. Threonine 637 and threonine 667 each carry phosphothreonine.

In terms of assembly, interacts with VHL. Interacts with MHC class I and HM13. Component of SCAP-SREBP complex composed of SREBF2, SCAP and RNF139; the complex hampers the interaction between SCAP and SEC24B, thereby reducing SREBF2 proteolytic processing. Interacts with SREBF2 (via C-terminal domain). Interacts with SCAP; the interaction inhibits the interaction of SCAP with SEC24B and hampering the ER to Golgi transport of the SCAP-SREBP complex. Interacts with SEC24B. Interacts with INSIG1 and INSIG2. Interacts with EIF3F and EIF3H; the interaction leads to protein translation inhibitions in a ubiquitination-dependent manner. Interacts with XBP1 isoform 1; the interaction induces ubiquitination and degradation of XBP1 isoform 1. Interacts with AUP1, AMFR and UBE2G2; interaction with AUP1 facilitates interaction of RNF139 with ubiquitin-conjugating enzyme UBE2G2 and ubiquitin ligase AMFR/gp78, leading to sterol-induced ubiquitination of HMGCR and its subsequent proteasomal degradation. Autoubiquitinated. Ubiquitination is induced by sterol and leads to ist degradation via the ubiquitin-proteasome pathway.

Its subcellular location is the endoplasmic reticulum membrane. It carries out the reaction S-ubiquitinyl-[E2 ubiquitin-conjugating enzyme]-L-cysteine + [acceptor protein]-L-lysine = [E2 ubiquitin-conjugating enzyme]-L-cysteine + N(6)-ubiquitinyl-[acceptor protein]-L-lysine.. Its pathway is protein modification; protein ubiquitination. Functionally, E3-ubiquitin ligase; acts as a negative regulator of cell proliferation through mechanisms involving G2/M arrest and cell death. Required for MHC class I ubiquitination in cells expressing the cytomegalovirus protein US2 before dislocation from the endoplasmic reticulum (ER). Affects SREBP processing by hindering the SREBP-SCAP complex translocation from the ER to the Golgi, thereby reducing SREBF2 target gene expression. Involved in the sterol-accelerated degradation of HMGCR. This is achieved through binding to INSIG1 and/or INSIG2 at the ER membrane. In addition, interaction of RNF139 with AUP1 facilitates interaction of RNF139 with ubiquitin-conjugating enzyme UBE2G2 and ubiquitin ligase AMFR, leading to ubiquitination of HMGCR. The ubiquitinated HMGCR is then released from the ER by the complex into the cytosol for subsequent destruction. Required for INSIG1 ubiquitination. May be required for EIF3 complex ubiquitination. This chain is E3 ubiquitin-protein ligase RNF139, found in Mus musculus (Mouse).